The sequence spans 218 residues: Small ribosomal subunit protein uS3c (218 aa).

Positions 47 to 118 (VQKHMRVSSG…RLNIAITRVA (72 aa)) constitute a KH type-2 domain.

This sequence belongs to the universal ribosomal protein uS3 family. In terms of assembly, part of the 30S ribosomal subunit.

It is found in the plastid. Its subcellular location is the chloroplast. The sequence is that of Small ribosomal subunit protein uS3c (rps3) from Illicium oligandrum (Star anise).